The sequence spans 302 residues: UDP-3-O-acyl-N-acetylglucosamine deacetylase (302 aa).

H78, H237, and D241 together coordinate Zn(2+). The Proton donor role is filled by H264.

Belongs to the LpxC family. Zn(2+) is required as a cofactor.

It carries out the reaction a UDP-3-O-[(3R)-3-hydroxyacyl]-N-acetyl-alpha-D-glucosamine + H2O = a UDP-3-O-[(3R)-3-hydroxyacyl]-alpha-D-glucosamine + acetate. Its pathway is glycolipid biosynthesis; lipid IV(A) biosynthesis; lipid IV(A) from (3R)-3-hydroxytetradecanoyl-[acyl-carrier-protein] and UDP-N-acetyl-alpha-D-glucosamine: step 2/6. Functionally, catalyzes the hydrolysis of UDP-3-O-myristoyl-N-acetylglucosamine to form UDP-3-O-myristoylglucosamine and acetate, the committed step in lipid A biosynthesis. The chain is UDP-3-O-acyl-N-acetylglucosamine deacetylase from Hahella chejuensis (strain KCTC 2396).